A 374-amino-acid chain; its full sequence is Alcohol dehydrogenase class-3 (374 aa).

An N-acetylalanine modification is found at alanine 2. Residues cysteine 45, histidine 67, cysteine 97, cysteine 100, cysteine 103, cysteine 111, and cysteine 174 each contribute to the Zn(2+) site. Residue lysine 233 is modified to N6-succinyllysine. A Phosphoserine modification is found at serine 247. Lysine 315 carries the N6-succinyllysine modification. A phosphoserine mark is found at serine 324 and serine 351.

It belongs to the zinc-containing alcohol dehydrogenase family. Class-III subfamily. As to quaternary structure, homodimer. Zn(2+) serves as cofactor.

It localises to the cytoplasm. It catalyses the reaction a primary alcohol + NAD(+) = an aldehyde + NADH + H(+). It carries out the reaction a secondary alcohol + NAD(+) = a ketone + NADH + H(+). The enzyme catalyses S-(hydroxymethyl)glutathione + NADP(+) = S-formylglutathione + NADPH + H(+). The catalysed reaction is S-(hydroxymethyl)glutathione + NAD(+) = S-formylglutathione + NADH + H(+). It catalyses the reaction 20-oxo-(5Z,8Z,11Z,14Z)-eicosatetraenoate + NAD(+) + H2O = (5Z,8Z,11Z,14Z)-eicosatetraenedioate + NADH + 2 H(+). It carries out the reaction 20-hydroxy-(5Z,8Z,11Z,14Z)-eicosatetraenoate + NAD(+) = 20-oxo-(5Z,8Z,11Z,14Z)-eicosatetraenoate + NADH + H(+). The enzyme catalyses S-nitrosoglutathione + NADH + H(+) = S-(hydroxysulfenamide)glutathione + NAD(+). Its function is as follows. Catalyzes the oxidation of long-chain primary alcohols and the oxidation of S-(hydroxymethyl) glutathione. Also oxidizes long chain omega-hydroxy fatty acids, such as 20-HETE, producing both the intermediate aldehyde, 20-oxoarachidonate and the end product, a dicarboxylic acid, (5Z,8Z,11Z,14Z)-eicosatetraenedioate. Class-III ADH is remarkably ineffective in oxidizing ethanol. Required for clearance of cellular formaldehyde, a cytotoxic and carcinogenic metabolite that induces DNA damage. Also acts as a S-nitroso-glutathione reductase by catalyzing the NADH-dependent reduction of S-nitrosoglutathione, thereby regulating protein S-nitrosylation. The protein is Alcohol dehydrogenase class-3 of Homo sapiens (Human).